Here is a 116-residue protein sequence, read N- to C-terminus: MTDKKVTRLRRARKARLKMHELEAVRLCVYRSSQHIYAQVISADGSKVLASASTLDKALRDGATGNVDAAKKVGQLVAERAKAAGVTQVAFDRSGFKYHGRVKALADAAREGGLEF.

Belongs to the universal ribosomal protein uL18 family. In terms of assembly, part of the 50S ribosomal subunit; part of the 5S rRNA/L5/L18/L25 subcomplex. Contacts the 5S and 23S rRNAs.

This is one of the proteins that bind and probably mediate the attachment of the 5S RNA into the large ribosomal subunit, where it forms part of the central protuberance. The sequence is that of Large ribosomal subunit protein uL18 from Ectopseudomonas mendocina (strain ymp) (Pseudomonas mendocina).